A 312-amino-acid polypeptide reads, in one-letter code: Very-long-chain 3-oxoacyl-CoA reductase-like protein At1g24470 (312 aa).

Residues 14 to 34 form a helical membrane-spanning segment; it reads LHFVCFIGFLFLLRVLFIPLL. Residue 52–81 participates in NADP(+) binding; sequence GSWAMVTGATEGIGRAFAHELAKHGLNLIL. Position 190 (S190) interacts with substrate. The active-site Proton acceptor is the Y205.

It belongs to the short-chain dehydrogenases/reductases (SDR) family. As to expression, expressed in green siliques, flowers, inflorescence stems and leaves. Not detected in roots.

Its subcellular location is the endoplasmic reticulum membrane. Its function is as follows. Probable reductase, but unlike KCR1, has no beta-ketoacyl-coenzyme A reductase activity. This chain is Very-long-chain 3-oxoacyl-CoA reductase-like protein At1g24470 (KCR2), found in Arabidopsis thaliana (Mouse-ear cress).